The primary structure comprises 567 residues: Formate--tetrahydrofolate ligase (567 aa).

68–75 contributes to the ATP binding site; it reads TPLGEGKT.

It belongs to the formate--tetrahydrofolate ligase family.

The catalysed reaction is (6S)-5,6,7,8-tetrahydrofolate + formate + ATP = (6R)-10-formyltetrahydrofolate + ADP + phosphate. Its pathway is one-carbon metabolism; tetrahydrofolate interconversion. The polypeptide is Formate--tetrahydrofolate ligase (Desulforamulus reducens (strain ATCC BAA-1160 / DSM 100696 / MI-1) (Desulfotomaculum reducens)).